A 345-amino-acid polypeptide reads, in one-letter code: Serpentine receptor class beta-13 (345 aa).

Residues 1 to 22 (MAGINQTKCDLGFQITFNTVYR) lie on the Extracellular side of the membrane. The N-linked (GlcNAc...) asparagine glycan is linked to N5. Residues 23–43 (FSQFYTFSVSSFAVPGLIYFM) traverse the membrane as a helical segment. The Cytoplasmic segment spans residues 44–58 (FKRLFQLYFHGNLKT). Residues 59–79 (LLIAYFISILLYAVMLCFAFG) form a helical membrane-spanning segment. The Extracellular segment spans residues 80-103 (YQFFVPFFIKSNCDLIINKTLFKY). Residue N97 is glycosylated (N-linked (GlcNAc...) asparagine). The helical transmembrane segment at 104–124 (IHTSVIFLLTTPMMFPLGFSI) threads the bilayer. Residues 125–142 (ERFTAMAMASRYENIRTL) lie on the Cytoplasmic side of the membrane. The chain crosses the membrane as a helical span at residues 143–163 (IGPVLVIFLIIPNCIIFYFLF). The Extracellular portion of the chain corresponds to 164-189 (QHETYDDTFISFLMLPNTTAVNFNTY). An N-linked (GlcNAc...) asparagine glycan is attached at N180. Residues 190 to 210 (LWFLLYLNIGNLALNVLLLLV) form a helical membrane-spanning segment. At 211 to 241 (HRKFKRRLLLHKTSLSTRYAIEEISQSSKFT) the chain is on the cytoplasmic side. The chain crosses the membrane as a helical span at residues 242 to 262 (LIITFTHLLFFGCNTICSILV). Topologically, residues 263–280 (RVLGEPFFGSFINHSVAR) are extracellular. N275 is a glycosylation site (N-linked (GlcNAc...) asparagine). The helical transmembrane segment at 281 to 301 (GVNCAVPTYNLVIVVVGFVSL) threads the bilayer. The Cytoplasmic portion of the chain corresponds to 302–345 (SKLNSRRQQEVQTTVQLKTTGKEGARNYDNITANQWATITQIGF).

The protein belongs to the nematode receptor-like protein srb family. Expressed in the head sensory neurons ASI, ASK and AWB. Not expressed in male somatic gonads or sperm.

It localises to the cell membrane. The protein resides in the perikaryon. Its subcellular location is the cell projection. It is found in the dendrite. In terms of biological role, G-protein coupled receptor that antagonizes the negative effects of the gcy-35 oxygen sensor on spermatogenesis. This leads to the maintenance of mitochondrial function in developing spermatocytes and/or spermatids prior to testis maturation during the early larval stages. Regulates the navigational capacity of sperm during hyperoxic conditions ensuring the proper targeting of sperm derived from males to the fertilization site in the uterus of hermaphrodites. May act in the same signaling pathway as the neuropeptide flp-21. The polypeptide is Serpentine receptor class beta-13 (Caenorhabditis elegans).